The primary structure comprises 94 residues: ESAT-6-like protein EsxL (94 aa).

This sequence belongs to the WXG100 family. ESAT-6 subfamily. In terms of assembly, strongly interacts with EsxK to form a heterodimeric complex under reducing conditions. The complex is regulated by the redox state of EsxL.

The protein localises to the secreted. In terms of biological role, induces apoptosis of host cells. Is immunogenic with highly specific seroreactivity towards TB patients' serum. This chain is ESAT-6-like protein EsxL, found in Mycobacterium tuberculosis (strain ATCC 25618 / H37Rv).